Consider the following 264-residue polypeptide: Triosephosphate isomerase (264 aa).

Asparagine 13 to lysine 15 contributes to the substrate binding site. Histidine 98 acts as the Electrophile in catalysis. Glutamate 170 (proton acceptor) is an active-site residue. Residues glycine 176, serine 216, and glycine 237 to glycine 238 contribute to the substrate site.

Belongs to the triosephosphate isomerase family. Homodimer.

The protein resides in the cytoplasm. It carries out the reaction D-glyceraldehyde 3-phosphate = dihydroxyacetone phosphate. It participates in carbohydrate biosynthesis; gluconeogenesis. It functions in the pathway carbohydrate degradation; glycolysis; D-glyceraldehyde 3-phosphate from glycerone phosphate: step 1/1. Involved in the gluconeogenesis. Catalyzes stereospecifically the conversion of dihydroxyacetone phosphate (DHAP) to D-glyceraldehyde-3-phosphate (G3P). The chain is Triosephosphate isomerase from Protochlamydia amoebophila (strain UWE25).